We begin with the raw amino-acid sequence, 404 residues long: 4-hydroxy-3-methylbut-2-enyl diphosphate reductase (404 aa).

Residue Cys-66 participates in [4Fe-4S] cluster binding. His-96 is a binding site for (2E)-4-hydroxy-3-methylbut-2-enyl diphosphate. Dimethylallyl diphosphate is bound at residue His-96. His-96 provides a ligand contact to isopentenyl diphosphate. Position 157 (Cys-157) interacts with [4Fe-4S] cluster. His-185 serves as a coordination point for (2E)-4-hydroxy-3-methylbut-2-enyl diphosphate. His-185 lines the dimethylallyl diphosphate pocket. Position 185 (His-185) interacts with isopentenyl diphosphate. Catalysis depends on Glu-187, which acts as the Proton donor. Thr-250 provides a ligand contact to (2E)-4-hydroxy-3-methylbut-2-enyl diphosphate. Cys-288 provides a ligand contact to [4Fe-4S] cluster. Ser-317, Ser-318, Asn-319, and Ser-380 together coordinate (2E)-4-hydroxy-3-methylbut-2-enyl diphosphate. Residues Ser-317, Ser-318, Asn-319, and Ser-380 each contribute to the dimethylallyl diphosphate site. The isopentenyl diphosphate site is built by Ser-317, Ser-318, Asn-319, and Ser-380.

This sequence belongs to the IspH family. [4Fe-4S] cluster is required as a cofactor.

The enzyme catalyses isopentenyl diphosphate + 2 oxidized [2Fe-2S]-[ferredoxin] + H2O = (2E)-4-hydroxy-3-methylbut-2-enyl diphosphate + 2 reduced [2Fe-2S]-[ferredoxin] + 2 H(+). It catalyses the reaction dimethylallyl diphosphate + 2 oxidized [2Fe-2S]-[ferredoxin] + H2O = (2E)-4-hydroxy-3-methylbut-2-enyl diphosphate + 2 reduced [2Fe-2S]-[ferredoxin] + 2 H(+). It functions in the pathway isoprenoid biosynthesis; dimethylallyl diphosphate biosynthesis; dimethylallyl diphosphate from (2E)-4-hydroxy-3-methylbutenyl diphosphate: step 1/1. It participates in isoprenoid biosynthesis; isopentenyl diphosphate biosynthesis via DXP pathway; isopentenyl diphosphate from 1-deoxy-D-xylulose 5-phosphate: step 6/6. Its function is as follows. Catalyzes the conversion of 1-hydroxy-2-methyl-2-(E)-butenyl 4-diphosphate (HMBPP) into a mixture of isopentenyl diphosphate (IPP) and dimethylallyl diphosphate (DMAPP). Acts in the terminal step of the DOXP/MEP pathway for isoprenoid precursor biosynthesis. The sequence is that of 4-hydroxy-3-methylbut-2-enyl diphosphate reductase from Prochlorococcus marinus (strain MIT 9211).